The sequence spans 161 residues: Cyclin-dependent protein kinase inhibitor SMR12 (161 aa).

The span at glutamate 84–asparagine 93 shows a compositional bias: acidic residues. Residues glutamate 84–isoleucine 106 are disordered.

Its function is as follows. Probable cyclin-dependent protein kinase (CDK) inhibitor that functions as a repressor of mitosis in the endoreduplication cell cycle. This chain is Cyclin-dependent protein kinase inhibitor SMR12, found in Arabidopsis thaliana (Mouse-ear cress).